A 264-amino-acid chain; its full sequence is ATP synthase subunit a (264 aa).

Transmembrane regions (helical) follow at residues 39-59 (LDTLIISVVLGALFILIFYIV), 97-117 (VAPLALTIFIWVFLMNFMDLV), 139-159 (TADPTLTFAMSITVFVLVIFY), 205-225 (LFGNLFAGELIFILIALLPWW), and 239-259 (LLVITVQAFIFMMLTVVYISL).

It belongs to the ATPase A chain family. In terms of assembly, F-type ATPases have 2 components, CF(1) - the catalytic core - and CF(0) - the membrane proton channel. CF(1) has five subunits: alpha(3), beta(3), gamma(1), delta(1), epsilon(1). CF(0) has three main subunits: a(1), b(2) and c(9-12). The alpha and beta chains form an alternating ring which encloses part of the gamma chain. CF(1) is attached to CF(0) by a central stalk formed by the gamma and epsilon chains, while a peripheral stalk is formed by the delta and b chains.

It localises to the cell inner membrane. In terms of biological role, key component of the proton channel; it plays a direct role in the translocation of protons across the membrane. In Coxiella burnetii (strain RSA 331 / Henzerling II), this protein is ATP synthase subunit a.